A 443-amino-acid polypeptide reads, in one-letter code: Amino-acid acetyltransferase (443 aa).

Positions 296-436 constitute an N-acetyltransferase domain; the sequence is EQIRRATIND…KMYNYQRRSK (141 aa).

Belongs to the acetyltransferase family. ArgA subfamily. Homohexamer.

It localises to the cytoplasm. The enzyme catalyses L-glutamate + acetyl-CoA = N-acetyl-L-glutamate + CoA + H(+). It participates in amino-acid biosynthesis; L-arginine biosynthesis; N(2)-acetyl-L-ornithine from L-glutamate: step 1/4. The protein is Amino-acid acetyltransferase of Salmonella arizonae (strain ATCC BAA-731 / CDC346-86 / RSK2980).